The primary structure comprises 370 residues: Homoserine O-acetyltransferase (370 aa).

The AB hydrolase-1 domain maps to 44 to 350 (NAILVAHAWT…AYGHDAFLLE (307 aa)). The Nucleophile role is filled by serine 150. Residue arginine 217 participates in substrate binding. Active-site residues include aspartate 311 and histidine 344. Aspartate 345 serves as a coordination point for substrate.

This sequence belongs to the AB hydrolase superfamily. MetX family. Homodimer.

It localises to the cytoplasm. The enzyme catalyses L-homoserine + acetyl-CoA = O-acetyl-L-homoserine + CoA. The protein operates within amino-acid biosynthesis; L-methionine biosynthesis via de novo pathway; O-acetyl-L-homoserine from L-homoserine: step 1/1. Functionally, transfers an acetyl group from acetyl-CoA to L-homoserine, forming acetyl-L-homoserine. This chain is Homoserine O-acetyltransferase, found in Geotalea uraniireducens (strain Rf4) (Geobacter uraniireducens).